The sequence spans 1849 residues: UPF0606 protein KIAA1549L (1849 aa).

Over residues 1-10 the composition is skewed to polar residues; sequence MDHTASQNAQ. Disordered stretches follow at residues 1–70, 142–166, 213–242, and 529–586; these read MDHT…LLQL, ATAN…PALS, PTEN…PATR, and RHSV…ERNA. Composition is skewed to polar residues over residues 529-541 and 552-586; these read RHSV…QLPN and PGPT…ERNA. Positions 958 to 986 form a coiled coil; sequence KFAQTMEQRLQKAFQDAERKVLNTKSNLT. Residues 1180 to 1200 form a helical membrane-spanning segment; that stretch reads LWIIAAVLAPIAVVTVIIIII. Disordered regions lie at residues 1258–1338, 1460–1546, 1656–1679, and 1769–1819; these read LPIR…EEEG, SKNR…SQPS, RSTS…AQLH, and SRYP…APLT. Polar residues-rich tracts occupy residues 1290 to 1319, 1463 to 1482, and 1537 to 1546; these read PSEN…AQQK, RQQM…SPSP, and ETSTLSSQPS. Composition is skewed to low complexity over residues 1769–1786 and 1795–1809; these read SRYP…YSQP and QAPA…QSLA.

Belongs to the UPF0606 family.

The protein resides in the membrane. The protein is UPF0606 protein KIAA1549L (KIAA1549L) of Homo sapiens (Human).